The primary structure comprises 321 residues: Acetyl-coenzyme A carboxylase carboxyl transferase subunit alpha (321 aa).

The CoA carboxyltransferase C-terminal domain maps to 39–293 (KLEEKSRKLT…KTELKRNLEE (255 aa)).

It belongs to the AccA family. In terms of assembly, acetyl-CoA carboxylase is a heterohexamer composed of biotin carboxyl carrier protein (AccB), biotin carboxylase (AccC) and two subunits each of ACCase subunit alpha (AccA) and ACCase subunit beta (AccD).

Its subcellular location is the cytoplasm. It catalyses the reaction N(6)-carboxybiotinyl-L-lysyl-[protein] + acetyl-CoA = N(6)-biotinyl-L-lysyl-[protein] + malonyl-CoA. Its pathway is lipid metabolism; malonyl-CoA biosynthesis; malonyl-CoA from acetyl-CoA: step 1/1. In terms of biological role, component of the acetyl coenzyme A carboxylase (ACC) complex. First, biotin carboxylase catalyzes the carboxylation of biotin on its carrier protein (BCCP) and then the CO(2) group is transferred by the carboxyltransferase to acetyl-CoA to form malonyl-CoA. The sequence is that of Acetyl-coenzyme A carboxylase carboxyl transferase subunit alpha from Methylococcus capsulatus (strain ATCC 33009 / NCIMB 11132 / Bath).